The primary structure comprises 112 residues: MYB-like transcription factor ETC2 (112 aa).

The Myb-like domain maps to 41-78 (TEQEEDLISRMYRLVGNRWDLIAGRVVGRKANEIERYW).

In terms of assembly, interacts with GL3. Expressed in stomatal guard mother cells, young stomata and trichomes of young leaves, and inflorescences.

The protein resides in the nucleus. In terms of biological role, MYB-type transcription factor involved in epidermal cell fate specification. Acts as a negative regulator of trichome development, by mediating lateral inhibition. Promotes the formation of hair developing cells in H position in root epidermis, probably by inhibiting non-hair cell formation. This Arabidopsis thaliana (Mouse-ear cress) protein is MYB-like transcription factor ETC2 (ETC2).